A 167-amino-acid polypeptide reads, in one-letter code: Ubiquitin-fold modifier-conjugating enzyme 1 (167 aa).

Cysteine 116 (glycyl thioester intermediate) is an active-site residue.

It belongs to the ubiquitin-conjugating enzyme family. UFC1 subfamily.

E2-like enzyme which forms an intermediate with UFM1 via a thioester linkage. This is Ubiquitin-fold modifier-conjugating enzyme 1 from Anopheles gambiae (African malaria mosquito).